The following is a 212-amino-acid chain: Maleylacetoacetate isomerase (212 aa).

A GST N-terminal domain is found at 1-83 (MKLYTYYRST…YLEERYPQPA (83 aa)). The 124-residue stretch at 88-211 (DPLRRARERG…HPANQPDTPA (124 aa)) folds into the GST C-terminal domain.

It belongs to the GST superfamily. Zeta family.

The enzyme catalyses 4-maleylacetoacetate = 4-fumarylacetoacetate. The protein operates within amino-acid degradation; L-phenylalanine degradation; acetoacetate and fumarate from L-phenylalanine: step 5/6. In Pseudomonas aeruginosa (strain ATCC 15692 / DSM 22644 / CIP 104116 / JCM 14847 / LMG 12228 / 1C / PRS 101 / PAO1), this protein is Maleylacetoacetate isomerase (maiA).